The primary structure comprises 291 residues: Pantothenate synthetase 1 (291 aa).

Catalysis depends on His-37, which acts as the Proton donor. ATP is bound at residue 147-150 (GEKD). Gln-153 is a (R)-pantoate binding site. 184 to 187 (ISSR) contributes to the ATP binding site.

The protein belongs to the pantothenate synthetase family. As to quaternary structure, homodimer.

Its subcellular location is the cytoplasm. The catalysed reaction is (R)-pantoate + beta-alanine + ATP = (R)-pantothenate + AMP + diphosphate + H(+). It participates in cofactor biosynthesis; (R)-pantothenate biosynthesis; (R)-pantothenate from (R)-pantoate and beta-alanine: step 1/1. In terms of biological role, catalyzes the condensation of pantoate with beta-alanine in an ATP-dependent reaction via a pantoyl-adenylate intermediate. The sequence is that of Pantothenate synthetase 1 from Frankia alni (strain DSM 45986 / CECT 9034 / ACN14a).